Reading from the N-terminus, the 347-residue chain is Phenylalanine--tRNA ligase alpha subunit (347 aa).

E261 lines the Mg(2+) pocket.

This sequence belongs to the class-II aminoacyl-tRNA synthetase family. Phe-tRNA synthetase alpha subunit type 1 subfamily. In terms of assembly, tetramer of two alpha and two beta subunits. It depends on Mg(2+) as a cofactor.

Its subcellular location is the cytoplasm. It carries out the reaction tRNA(Phe) + L-phenylalanine + ATP = L-phenylalanyl-tRNA(Phe) + AMP + diphosphate + H(+). The chain is Phenylalanine--tRNA ligase alpha subunit from Streptococcus pyogenes serotype M1.